The following is a 186-amino-acid chain: Ribosome-recycling factor (186 aa).

It belongs to the RRF family.

Its subcellular location is the cytoplasm. Functionally, responsible for the release of ribosomes from messenger RNA at the termination of protein biosynthesis. May increase the efficiency of translation by recycling ribosomes from one round of translation to another. This chain is Ribosome-recycling factor, found in Nitratiruptor sp. (strain SB155-2).